We begin with the raw amino-acid sequence, 142 residues long: VapC ribonuclease R02377 (142 aa).

The PINc domain maps to 3 to 140 (FVDGSVIVAI…YKGNDFSQTD (138 aa)). Residues aspartate 5 and aspartate 115 each contribute to the Mg(2+) site.

It belongs to the PINc/VapC protein family. Mg(2+) serves as cofactor.

Toxic component of a type II toxin-antitoxin (TA) system. An RNase. The protein is VapC ribonuclease R02377 of Rhizobium meliloti (strain 1021) (Ensifer meliloti).